A 149-amino-acid polypeptide reads, in one-letter code: Transcriptional repressor NrdR (149 aa).

Residues 3-34 (CPFCFAVDTKVIDSRLVGEGSSVRRRRQCLVC) fold into a zinc finger. In terms of domain architecture, ATP-cone spans 49-139 (PRVVKSNDVR…VYRSFEDIRE (91 aa)).

The protein belongs to the NrdR family. Zn(2+) serves as cofactor.

Its function is as follows. Negatively regulates transcription of bacterial ribonucleotide reductase nrd genes and operons by binding to NrdR-boxes. This is Transcriptional repressor NrdR from Cronobacter sakazakii (strain ATCC BAA-894) (Enterobacter sakazakii).